The chain runs to 504 residues: Cytochrome P450 monooxygenase gliF (504 aa).

A helical membrane pass occupies residues 13–31 (AVAVSFGVGLLYWVYRLLL). N-linked (GlcNAc...) asparagine glycosylation is found at Asn-197 and Asn-299. Cys-449 provides a ligand contact to heme.

Belongs to the cytochrome P450 family. Heme is required as a cofactor.

It is found in the membrane. It functions in the pathway mycotoxin biosynthesis. Cytochrome P450 monooxygenase; part of the gene cluster that mediates the biosynthesis of gliotoxin, a member of the epipolythiodioxopiperazine (ETP) class of toxins characterized by a disulfide bridged cyclic dipeptide. The first step in gliotoxin biosynthesis is the condensation of serine and phenylalanine to form the cyclo-L-phenylalanyl-L-serine diketopiperazine (DKP) by the NRPS gliP. GliP is also able to produce the DKP cyclo-L-tryptophanyl-L-serine, suggesting that the substrate specificity of the first adenylation (A) domain in gliP is sufficiently relaxed to accommodate both L-Phe and L-Trp. The cytochrome P450 monooxygenase gliC has been shown to catalyze the subsequent hydroxylation of the alpha-carbon of L-Phe in cyclo-L-phenylalanyl-L-serine whereas the second cytochrome P450 enzyme, gliF, is presumably involved in the modification of the DKP side chain. The glutathione S-transferase (GST) gliG then forms a bis-glutathionylated biosynthetic intermediate which is responsible for the sulfurization of gliotoxin. This bis-glutathionylated intermediate is subsequently processed by the gamma-glutamyl cyclotransferase gliK to remove both gamma-glutamyl moieties. Subsequent processing via gliI yields a biosynthetic intermediate, which is N-methylated via the N-methyltransferase gliN, before the gliotoxin oxidoreductase gliT-mediated disulfide bridge closure. GliN-mediated amide methylation confers stability to ETP, damping the spontaneous formation of tri- and tetrasulfides. Intracellular dithiol gliotoxin oxidized by gliT is subsequently effluxed by gliA. Gliotoxin contributes to pathogenesis during invasive aspergillosis. In macrophages and neutrophils, gliotoxin showed inhibition of various different cell functions including cytokine production, antigen presentation, phagocytosis, and production of reactive oxygen species. This is Cytochrome P450 monooxygenase gliF from Aspergillus fumigatus (strain ATCC MYA-4609 / CBS 101355 / FGSC A1100 / Af293) (Neosartorya fumigata).